A 1072-amino-acid polypeptide reads, in one-letter code: Vacuolar membrane protease (1072 aa).

The Cytoplasmic segment spans residues 1 to 9 (MINPISFRP). The helical transmembrane segment at 10 to 30 (GPVTFWTTLIYLALLIPIVII) threads the bilayer. At 31–404 (NEKTPAAPKT…SFVLFGLRGM (374 aa)) the chain is on the vacuolar side. 4 N-linked (GlcNAc...) asparagine glycosylation sites follow: Asn48, Asn116, Asn119, and Asn128. Zn(2+) contacts are provided by His185 and Asp197. Residue Glu231 is the Proton acceptor of the active site. Zn(2+) contacts are provided by Glu232, Glu257, and His330. Residues 405–425 (FAWSLTLLIATPLVLVGITWL) traverse the membrane as a helical segment. The Cytoplasmic portion of the chain corresponds to 426 to 457 (LRNLDKDYFFTSTVKTKEHPEYEAVPIGGWKG). Residues 458-478 (FFRFPFALGVAVFFTISSALL) form a helical membrane-spanning segment. At 479-492 (MNKVNPLIVYSSRY) the chain is on the vacuolar side. Residues 493–513 (SVWVMMVSIFYFSFWMIMRGA) form a helical membrane-spanning segment. Residues 514-523 (NFVRPSALHR) are Cytoplasmic-facing. A helical membrane pass occupies residues 524 to 544 (GYANLWLFVFGWIVLVAVTAL). Residues 545–554 (EDRRRIAAGY) lie on the Vacuolar side of the membrane. The helical transmembrane segment at 555 to 575 (IFVFLESAIFLSCLISFVELL) threads the bilayer. Residues 576–747 (AVPRKSSYAL…YDHEQEWSGH (172 aa)) are Cytoplasmic-facing. The disordered stretch occupies residues 593-713 (GQEHDHNGYQ…GTNDRGRTTF (121 aa)). The segment covering 606–617 (DSTDEPSLRARA) has biased composition (basic and acidic residues). The span at 643 to 661 (GTTNGLSTAPSVAAHSSQP) shows a compositional bias: polar residues. The chain crosses the membrane as a helical span at residues 748 to 768 (LPSWAWFFQFLLLGPFMIILA). Residues 769–789 (AQTGLMLTDAVYQTGSDGSKL) lie on the Vacuolar side of the membrane. The helical transmembrane segment at 790 to 810 (ITPYLIIFVFTVLLILPLTPF) threads the bilayer. Topologically, residues 811-817 (IHRVTHH) are cytoplasmic. The helical transmembrane segment at 818-838 (IPVFLLVVFIVTLTYNLIAFP) threads the bilayer. Over 839-1072 (FSANNRYKTF…VEGRKAFKIV (234 aa)) the chain is Vacuolar. N-linked (GlcNAc...) asparagine glycosylation is found at Asn932 and Asn974.

Belongs to the peptidase M28 family. It depends on Zn(2+) as a cofactor.

The protein localises to the vacuole membrane. Functionally, may be involved in vacuolar sorting and osmoregulation. The sequence is that of Vacuolar membrane protease from Neurospora crassa (strain ATCC 24698 / 74-OR23-1A / CBS 708.71 / DSM 1257 / FGSC 987).